A 138-amino-acid polypeptide reads, in one-letter code: 1,4-dihydroxy-2-naphthoyl-CoA hydrolase (138 aa).

Residue Asp15 is part of the active site.

The protein belongs to the 4-hydroxybenzoyl-CoA thioesterase family. DHNA-CoA hydrolase subfamily.

The catalysed reaction is 1,4-dihydroxy-2-naphthoyl-CoA + H2O = 1,4-dihydroxy-2-naphthoate + CoA + H(+). The protein operates within cofactor biosynthesis; phylloquinone biosynthesis. Its pathway is quinol/quinone metabolism; 1,4-dihydroxy-2-naphthoate biosynthesis; 1,4-dihydroxy-2-naphthoate from chorismate: step 7/7. In terms of biological role, catalyzes the hydrolysis of 1,4-dihydroxy-2-naphthoyl-CoA (DHNA-CoA) to 1,4-dihydroxy-2-naphthoate (DHNA), a reaction involved in phylloquinone (vitamin K1) biosynthesis. This chain is 1,4-dihydroxy-2-naphthoyl-CoA hydrolase, found in Trichodesmium erythraeum (strain IMS101).